Reading from the N-terminus, the 104-residue chain is Gastrin (104 aa).

Residues 1–21 (MPRLCVCMLVLVLALATFSEA) form the signal peptide. Positions 22 to 58 (SWKPRSQLQDASSGPRTNGALEQHQLEKLGPASHHRR) are excised as a propeptide. Positions 23–104 (WKPRSQLQDA…RSAEEEDQYN (82 aa)) are disordered. Residues 25–37 (PRSQLQDASSGPR) show a composition bias toward polar residues. Position 87 is a sulfotyrosine (Tyr87). A Phenylalanine amide modification is found at Phe92. Phosphoserine is present on Ser96. Positions 96-104 (SAEEEDQYN) are excised as a propeptide. Tyr103 carries the post-translational modification Sulfotyrosine.

This sequence belongs to the gastrin/cholecystokinin family. Sulfation on Tyr-87 enhances proteolytic processing, and blocks peptide degradation. Levels of sulfation differ between proteolytically-cleaved gastrins and between tissues.

The protein localises to the secreted. In terms of biological role, gastrin stimulates the stomach mucosa to produce and secrete hydrochloric acid and the pancreas to secrete its digestive enzymes. It also stimulates smooth muscle contraction and increases blood circulation and water secretion in the stomach and intestine. The sequence is that of Gastrin (Gast) from Rattus norvegicus (Rat).